A 681-amino-acid chain; its full sequence is DNA-directed RNA polymerase subunit beta' (681 aa).

Zn(2+) is bound by residues cysteine 69, cysteine 71, cysteine 87, and cysteine 90. Aspartate 489, aspartate 491, and aspartate 493 together coordinate Mg(2+).

This sequence belongs to the RNA polymerase beta' chain family. RpoC1 subfamily. In terms of assembly, in plastids the minimal PEP RNA polymerase catalytic core is composed of four subunits: alpha, beta, beta', and beta''. When a (nuclear-encoded) sigma factor is associated with the core the holoenzyme is formed, which can initiate transcription. The cofactor is Mg(2+). Zn(2+) serves as cofactor.

Its subcellular location is the plastid. The protein resides in the chloroplast. The catalysed reaction is RNA(n) + a ribonucleoside 5'-triphosphate = RNA(n+1) + diphosphate. Its function is as follows. DNA-dependent RNA polymerase catalyzes the transcription of DNA into RNA using the four ribonucleoside triphosphates as substrates. The chain is DNA-directed RNA polymerase subunit beta' from Solanum bulbocastanum (Wild potato).